A 426-amino-acid polypeptide reads, in one-letter code: Enolase (426 aa).

Gln163 serves as a coordination point for (2R)-2-phosphoglycerate. The Proton donor role is filled by Glu205. Mg(2+) is bound by residues Asp242, Glu286, and Asp313. 4 residues coordinate (2R)-2-phosphoglycerate: Lys338, Arg367, Ser368, and Lys389. The active-site Proton acceptor is Lys338.

This sequence belongs to the enolase family. Requires Mg(2+) as cofactor.

It is found in the cytoplasm. Its subcellular location is the secreted. The protein resides in the cell surface. It carries out the reaction (2R)-2-phosphoglycerate = phosphoenolpyruvate + H2O. It functions in the pathway carbohydrate degradation; glycolysis; pyruvate from D-glyceraldehyde 3-phosphate: step 4/5. Functionally, catalyzes the reversible conversion of 2-phosphoglycerate (2-PG) into phosphoenolpyruvate (PEP). It is essential for the degradation of carbohydrates via glycolysis. The protein is Enolase of Helicobacter pylori (strain P12).